The primary structure comprises 142 residues: Hemoglobin subunit alpha-A (142 aa).

A Globin domain is found at 2–142 (VLSANDKTNV…VGNVLTAKYR (141 aa)). Histidine 59 serves as a coordination point for O2. Residue histidine 88 coordinates heme b.

It belongs to the globin family. In terms of assembly, heterotetramer of two alpha chains and two beta chains. As to expression, red blood cells.

Involved in oxygen transport from the lung to the various peripheral tissues. This chain is Hemoglobin subunit alpha-A (HBAA), found in Accipiter gentilis (Northern goshawk).